The following is a 313-amino-acid chain: tRNA-cytidine(32) 2-sulfurtransferase (313 aa).

Positions 47–52 (SGGKDS) match the PP-loop motif motif. [4Fe-4S] cluster-binding residues include Cys-122, Cys-125, and Cys-213. Positions 288–313 (PVGWQPEDDEDTEKRPPVRLDVLEIK) are disordered. A compositionally biased stretch (basic and acidic residues) spans 299-313 (TEKRPPVRLDVLEIK).

It belongs to the TtcA family. As to quaternary structure, homodimer. Requires Mg(2+) as cofactor. It depends on [4Fe-4S] cluster as a cofactor.

It localises to the cytoplasm. It catalyses the reaction cytidine(32) in tRNA + S-sulfanyl-L-cysteinyl-[cysteine desulfurase] + AH2 + ATP = 2-thiocytidine(32) in tRNA + L-cysteinyl-[cysteine desulfurase] + A + AMP + diphosphate + H(+). The protein operates within tRNA modification. Functionally, catalyzes the ATP-dependent 2-thiolation of cytidine in position 32 of tRNA, to form 2-thiocytidine (s(2)C32). The sulfur atoms are provided by the cysteine/cysteine desulfurase (IscS) system. The protein is tRNA-cytidine(32) 2-sulfurtransferase of Yersinia pseudotuberculosis serotype O:1b (strain IP 31758).